A 156-amino-acid chain; its full sequence is Ribosomal RNA large subunit methyltransferase H (156 aa).

S-adenosyl-L-methionine is bound by residues L73, G104, and 123 to 128 (VSSLTL).

It belongs to the RNA methyltransferase RlmH family. In terms of assembly, homodimer.

Its subcellular location is the cytoplasm. It carries out the reaction pseudouridine(1915) in 23S rRNA + S-adenosyl-L-methionine = N(3)-methylpseudouridine(1915) in 23S rRNA + S-adenosyl-L-homocysteine + H(+). Its function is as follows. Specifically methylates the pseudouridine at position 1915 (m3Psi1915) in 23S rRNA. The sequence is that of Ribosomal RNA large subunit methyltransferase H from Paraburkholderia phytofirmans (strain DSM 17436 / LMG 22146 / PsJN) (Burkholderia phytofirmans).